The sequence spans 324 residues: tRNA pseudouridine synthase B (324 aa).

The active-site Nucleophile is Asp-49. The interval 87–107 is disordered; sequence RSTDDLEGQPTKTSDKRPSRE.

The protein belongs to the pseudouridine synthase TruB family. Type 1 subfamily.

It carries out the reaction uridine(55) in tRNA = pseudouridine(55) in tRNA. Its function is as follows. Responsible for synthesis of pseudouridine from uracil-55 in the psi GC loop of transfer RNAs. The protein is tRNA pseudouridine synthase B of Brucella melitensis biotype 1 (strain ATCC 23456 / CCUG 17765 / NCTC 10094 / 16M).